We begin with the raw amino-acid sequence, 210 residues long: ATP-dependent Clp protease proteolytic subunit (210 aa).

S106 serves as the catalytic Nucleophile. H131 is a catalytic residue.

The protein belongs to the peptidase S14 family. Fourteen ClpP subunits assemble into 2 heptameric rings which stack back to back to give a disk-like structure with a central cavity, resembling the structure of eukaryotic proteasomes.

It is found in the cytoplasm. The catalysed reaction is Hydrolysis of proteins to small peptides in the presence of ATP and magnesium. alpha-casein is the usual test substrate. In the absence of ATP, only oligopeptides shorter than five residues are hydrolyzed (such as succinyl-Leu-Tyr-|-NHMec, and Leu-Tyr-Leu-|-Tyr-Trp, in which cleavage of the -Tyr-|-Leu- and -Tyr-|-Trp bonds also occurs).. In terms of biological role, cleaves peptides in various proteins in a process that requires ATP hydrolysis. Has a chymotrypsin-like activity. Plays a major role in the degradation of misfolded proteins. This is ATP-dependent Clp protease proteolytic subunit from Afipia carboxidovorans (strain ATCC 49405 / DSM 1227 / KCTC 32145 / OM5) (Oligotropha carboxidovorans).